Consider the following 60-residue polypeptide: Large ribosomal subunit protein uL30 (60 aa).

The protein belongs to the universal ribosomal protein uL30 family. In terms of assembly, part of the 50S ribosomal subunit.

The sequence is that of Large ribosomal subunit protein uL30 from Streptococcus thermophilus (strain CNRZ 1066).